A 305-amino-acid polypeptide reads, in one-letter code: Glycerol-3-phosphate dehydrogenase [NAD(P)+] (305 aa).

Positions 10, 29, and 87 each coordinate NADPH. Positions 87, 115, and 117 each coordinate sn-glycerol 3-phosphate. Ala-119 contributes to the NADPH binding site. Residues Lys-170, Asp-223, Ser-233, Arg-234, and Asn-235 each contribute to the sn-glycerol 3-phosphate site. The Proton acceptor role is filled by Lys-170. Position 234 (Arg-234) interacts with NADPH. An NADPH-binding site is contributed by Glu-255.

The protein belongs to the NAD-dependent glycerol-3-phosphate dehydrogenase family.

The protein resides in the cytoplasm. It catalyses the reaction sn-glycerol 3-phosphate + NAD(+) = dihydroxyacetone phosphate + NADH + H(+). The enzyme catalyses sn-glycerol 3-phosphate + NADP(+) = dihydroxyacetone phosphate + NADPH + H(+). Its pathway is membrane lipid metabolism; glycerophospholipid metabolism. In terms of biological role, catalyzes the reduction of the glycolytic intermediate dihydroxyacetone phosphate (DHAP) to sn-glycerol 3-phosphate (G3P), the key precursor for phospholipid synthesis. This chain is Glycerol-3-phosphate dehydrogenase [NAD(P)+], found in Cereibacter sphaeroides (strain ATCC 17023 / DSM 158 / JCM 6121 / CCUG 31486 / LMG 2827 / NBRC 12203 / NCIMB 8253 / ATH 2.4.1.) (Rhodobacter sphaeroides).